Here is a 127-residue protein sequence, read N- to C-terminus: Large ribosomal subunit protein bL20 (127 aa).

Belongs to the bacterial ribosomal protein bL20 family.

Binds directly to 23S ribosomal RNA and is necessary for the in vitro assembly process of the 50S ribosomal subunit. It is not involved in the protein synthesizing functions of that subunit. This is Large ribosomal subunit protein bL20 from Corynebacterium urealyticum (strain ATCC 43042 / DSM 7109).